Consider the following 564-residue polypeptide: Excitatory amino acid transporter 4 (564 aa).

The Cytoplasmic portion of the chain corresponds to 1–55 (MSSHGNSLFLRESGQRLGRVGWLQRLQESLQQRALRTRLRLQTMTREHVLRFLRR). A Phosphoserine modification is found at S2. The next 3 membrane-spanning stretches (helical) occupy residues 56 to 76 (NAFI…AFAL), 99 to 119 (MLQM…MASL), and 133 to 153 (VYYM…VTII). Residues N216, N232, and N239 are each glycosylated (N-linked (GlcNAc...) asparagine). The next 3 membrane-spanning stretches (helical) occupy residues 262-285 (SANG…IGGV), 295-322 (FFDS…LFLI), and 344-365 (LTVI…YFLI). The discontinuously helical intramembrane region spans 371 to 401 (FPFIGGVLQALITAMGTSSSSATLPITFRCL). 388–390 (SSS) provides a ligand contact to L-aspartate. The helical transmembrane segment at 411–437 (ITRFVLPVGATVNMDGTALYEALAAIF) threads the bilayer. Positions 419, 421, and 423 each coordinate Na(+). L-aspartate-binding positions include T427, 468–472 (IPQAG), D501, and N508. The discontinuously helical intramembrane region spans 451–484 (ITTISITATAASVGAAGIPQAGLVTMVIVLTSVG). The chain crosses the membrane as a helical span at residues 498–519 (WFLDRLRTMTNVLGDSIGAAVI). The Na(+) site is built by N508 and D512.

It belongs to the dicarboxylate/amino acid:cation symporter (DAACS) (TC 2.A.23) family. SLC1A6 subfamily. In terms of assembly, homotrimer. In terms of tissue distribution, detected in brain, cerebellum and hippocampus.

Its subcellular location is the cell membrane. The catalysed reaction is K(+)(in) + L-glutamate(out) + 3 Na(+)(out) + H(+)(out) = K(+)(out) + L-glutamate(in) + 3 Na(+)(in) + H(+)(in). The enzyme catalyses K(+)(in) + L-aspartate(out) + 3 Na(+)(out) + H(+)(out) = K(+)(out) + L-aspartate(in) + 3 Na(+)(in) + H(+)(in). It catalyses the reaction D-aspartate(out) + K(+)(in) + 3 Na(+)(out) + H(+)(out) = D-aspartate(in) + K(+)(out) + 3 Na(+)(in) + H(+)(in). Sodium-dependent, high-affinity amino acid transporter that mediates the uptake of L-glutamate and also L-aspartate and D-aspartate. Functions as a symporter that transports one amino acid molecule together with two or three Na(+) ions and one proton, in parallel with the counter-transport of one K(+) ion. Mediates Cl(-) flux that is not coupled to amino acid transport; this avoids the accumulation of negative charges due to aspartate and Na(+) symport. Plays a redundant role in the rapid removal of released glutamate from the synaptic cleft, which is essential for terminating the postsynaptic action of glutamate. This Canis lupus familiaris (Dog) protein is Excitatory amino acid transporter 4 (SLC1A6).